Here is a 460-residue protein sequence, read N- to C-terminus: Cysteine--tRNA ligase (460 aa).

Cysteine 28 contributes to the Zn(2+) binding site. The short motif at 30–40 (NTVYDFCHIGH) is the 'HIGH' region element. Zn(2+)-binding residues include cysteine 209, histidine 234, and glutamate 238. Positions 266-270 (KMSKS) match the 'KMSKS' region motif. Position 269 (lysine 269) interacts with ATP.

The protein belongs to the class-I aminoacyl-tRNA synthetase family. As to quaternary structure, monomer. It depends on Zn(2+) as a cofactor.

The protein resides in the cytoplasm. The enzyme catalyses tRNA(Cys) + L-cysteine + ATP = L-cysteinyl-tRNA(Cys) + AMP + diphosphate. The sequence is that of Cysteine--tRNA ligase from Marinomonas sp. (strain MWYL1).